A 782-amino-acid chain; its full sequence is Calcium-independent phospholipase A2-gamma (782 aa).

Asparagine 4 carries an N-linked (GlcNAc...) asparagine glycan. 2 disordered regions span residues 219 to 275 and 317 to 343; these read EKMS…PSAI and SKSQ…AEEK. The segment covering 220–248 has biased composition (basic and acidic residues); sequence KMSQQKENEHFRDKSELEDKKVEEGKLRS. An N-linked (GlcNAc...) asparagine glycan is attached at asparagine 361. Residues 445–640 form the PNPLA domain; sequence LSIDGGGTRG…LLNNPSALAM (196 aa). Residues 449-454 carry the GXGXXG motif; sequence GGGTRG. A helical transmembrane segment spans residues 475 to 495; the sequence is LFDYICGVSTGAILAFMLGLF. Positions 481–485 match the GXSXG motif; sequence GVSTG. Catalysis depends on serine 483, which acts as the Nucleophile. Aspartate 627 serves as the catalytic Proton acceptor. Residues 627–629 carry the DGA/G motif; it reads DGG. Position 736 is an N6-succinyllysine (lysine 736).

Expressed in parenchymal tissues including heart, skeletal muscle, placenta, brain, liver and pancreas. Also expressed in bronchial epithelial cells and kidney. Highest expression is observed in skeletal muscle and heart.

The protein resides in the endoplasmic reticulum membrane. It is found in the mitochondrion membrane. The protein localises to the peroxisome membrane. The catalysed reaction is a 1,2-diacyl-sn-glycero-3-phosphocholine + H2O = a 1-acyl-sn-glycero-3-phosphocholine + a fatty acid + H(+). The enzyme catalyses a 1,2-diacyl-sn-glycero-3-phosphocholine + H2O = a 2-acyl-sn-glycero-3-phosphocholine + a fatty acid + H(+). It catalyses the reaction a 1,2-diacyl-sn-glycero-3-phosphoethanolamine + H2O = a 1-acyl-sn-glycero-3-phosphoethanolamine + a fatty acid + H(+). It carries out the reaction a 1-O-(1Z-alkenyl)-2-acyl-sn-glycero-3-phosphocholine + H2O = a 1-O-(1Z-alkenyl)-sn-glycero-3-phosphocholine + a fatty acid + H(+). The catalysed reaction is a 1-acyl-sn-glycero-3-phosphocholine + H2O = sn-glycerol 3-phosphocholine + a fatty acid + H(+). The enzyme catalyses 1-acyl-2-(9Z,12Z)-octadecadienoyl-sn-glycero-3-phosphocholine + H2O = a 1-acyl-sn-glycero-3-phosphocholine + (9Z,12Z)-octadecadienoate + H(+). It catalyses the reaction 1-acyl-2-(5Z,8Z,11Z,14Z-eicosatetraenoyl)-sn-glycero-3-phosphocholine + H2O = a 1-acyl-sn-glycero-3-phosphocholine + (5Z,8Z,11Z,14Z)-eicosatetraenoate + H(+). It carries out the reaction 1-hexadecanoyl-2-(5Z,8Z,11Z,14Z-eicosatetraenoyl)-sn-glycero-3-phosphocholine + H2O = 1-hexadecanoyl-sn-glycero-3-phosphocholine + (5Z,8Z,11Z,14Z)-eicosatetraenoate + H(+). The catalysed reaction is 1-octadecanoyl-2-(9Z-octadecenoyl)-sn-glycero-3-phosphocholine + H2O = 1-octadecanoyl-sn-glycero-3-phosphocholine + (9Z)-octadecenoate + H(+). The enzyme catalyses 1-hexadecanoyl-2-(9Z-octadecenoyl)-sn-glycero-3-phosphocholine + H2O = 1-hexadecanoyl-sn-glycero-3-phosphocholine + (9Z)-octadecenoate + H(+). It catalyses the reaction 1-hexadecanoyl-2-(9Z,12Z-octadecadienoyl)-sn-glycero-3-phosphocholine + H2O = (9Z,12Z)-octadecadienoate + 1-hexadecanoyl-sn-glycero-3-phosphocholine + H(+). It carries out the reaction 1-acyl-2-(9Z,12Z)-octadecadienoyl-sn-glycero-3-phosphoethanolamine + H2O = a 1-acyl-sn-glycero-3-phosphoethanolamine + (9Z,12Z)-octadecadienoate + H(+). The catalysed reaction is 1-acyl-2-(5Z,8Z,11Z,14Z)-eicosatetraenoyl-sn-glycero-3-phosphoethanolamine + H2O = a 1-acyl-sn-glycero-3-phosphoethanolamine + (5Z,8Z,11Z,14Z)-eicosatetraenoate + H(+). The enzyme catalyses 1-hexadecanoyl-2-(5Z,8Z,11Z,14Z-eicosatetraenoyl)-sn-glycero-3-phosphoethanolamine + H2O = 1-hexadecanoyl-sn-glycero-3-phosphoethanolamine + (5Z,8Z,11Z,14Z)-eicosatetraenoate + H(+). It catalyses the reaction 1-hexadecanoyl-2-(5Z,8Z,11Z,14Z-eicosatetraenoyl)-sn-glycero-3-phosphocholine + H2O = 2-(5Z,8Z,11Z,14Z)-eicosatetraenoyl-sn-glycero-3-phosphocholine + hexadecanoate + H(+). It carries out the reaction 1-octadecanoyl-2-(9Z-octadecenoyl)-sn-glycero-3-phosphocholine + H2O = 2-(9Z-octadecenoyl)-sn-glycero-3-phosphocholine + octadecanoate + H(+). The catalysed reaction is 1-hexadecanoyl-2-(4Z,7Z,10Z,13Z,16Z,19Z-docosahexaenoyl)-sn-glycero-3-phosphocholine + H2O = 2-(4Z,7Z,10Z,13Z,16Z,19Z-docosahexaenoyl)-sn-glycero-3-phosphocholine + hexadecanoate + H(+). The enzyme catalyses 1-O-(1Z)-hexadecenyl-2 (5Z,8Z,11Z,14Z)-eicosatetraenoyl-sn-glycero-3-phosphocholine + H2O = 1-(1Z-hexadecenyl)-sn-glycero-3-phosphocholine + (5Z,8Z,11Z,14Z)-eicosatetraenoate + H(+). It catalyses the reaction 1-O-(1Z-hexadecenyl)-2-(9Z-octadecenoyl)-sn-glycero-3-phosphocholine + H2O = 1-(1Z-hexadecenyl)-sn-glycero-3-phosphocholine + (9Z)-octadecenoate + H(+). It carries out the reaction 1-hexadecanoyl-sn-glycero-3-phosphocholine + H2O = sn-glycerol 3-phosphocholine + hexadecanoate + H(+). The catalysed reaction is 1',3'-bis-[1,2-di-(9Z,12Z-octadecadienoyl)-sn-glycero-3-phospho]-glycerol + H2O = 1'-[1,2-di-(9Z,12Z-octadecadienoyl)-sn-glycero-3-phospho]-3'-[1-(9Z,12Z-octadecadienoyl)-sn-glycero-3-phospho]-glycerol + (9Z,12Z)-octadecadienoate + H(+). The enzyme catalyses 1'-[1-acyl-2-(9-hydroxy-(10E,12Z)-octadecadienoyl)-sn-glycero-3-phospho]-3'-[1,2-diacyl-sn-glycero-3-phospho]-glycerol + H2O = 9-hydroxy-(10E,12Z)-octadecadienoate + 1'-[1,2-diacyl-sn-glycero-3-phospho],3'-[1-acyl-sn-glycero-3-phospho]-glycerol + H(+). Its pathway is phospholipid metabolism. Calcium-independent phospholipase. Inhibited by (E)-6-bromomethylene-3-1-naphthalenyl-2H-tetrahydropyran-2-one (BEL). The activity toward 1-hexadecanoyl-2-(5Z,8Z,11Z,14Z-eicosatetraenoyl)-sn-glycero-3-phosphocholine is stimulated by cardiolipin. Functionally, calcium-independent and membrane-bound phospholipase, that catalyzes the esterolytic cleavage of fatty acids from glycerophospholipids to yield free fatty acids and lysophospholipids, hence regulating membrane physical properties and the release of lipid second messengers and growth factors. Hydrolyzes phosphatidylethanolamine, phosphatidylcholine and probably phosphatidylinositol with a possible preference for the former. Also has a broad substrate specificity in terms of fatty acid moieties, hydrolyzing saturated and mono-unsaturated fatty acids at nearly equal rates from either the sn-1 or sn-2 position in diacyl phosphatidylcholine. However, has a weak activity toward polyunsaturated fatty acids at the sn-2 position, and thereby favors the production of 2-arachidonoyl lysophosphatidylcholine, a key branch point metabolite in eicosanoid signaling. On the other hand, can produce arachidonic acid from the sn-1 position of diacyl phospholipid and from the sn-2 position of arachidonate-containing plasmalogen substrates. Therefore, plays an important role in the mobilization of arachidonic acid in response to cellular stimuli and the generation of lipid second messengers. Can also hydrolyze lysophosphatidylcholine. In the mitochondrial compartment, catalyzes the hydrolysis and release of oxidized aliphatic chains from cardiolipin and integrates mitochondrial bioenergetics and signaling. It is essential for maintaining efficient bioenergetic mitochondrial function through tailoring mitochondrial membrane lipid metabolism and composition. This is Calcium-independent phospholipase A2-gamma from Homo sapiens (Human).